Reading from the N-terminus, the 257-residue chain is Type III pantothenate kinase (257 aa).

An ATP-binding site is contributed by Asp5 to Lys12. Gly107–Arg110 provides a ligand contact to substrate. The active-site Proton acceptor is Asp109. Thr133 is an ATP binding site.

It belongs to the type III pantothenate kinase family. In terms of assembly, homodimer. NH4(+) serves as cofactor. Requires K(+) as cofactor.

Its subcellular location is the cytoplasm. It carries out the reaction (R)-pantothenate + ATP = (R)-4'-phosphopantothenate + ADP + H(+). Its pathway is cofactor biosynthesis; coenzyme A biosynthesis; CoA from (R)-pantothenate: step 1/5. Functionally, catalyzes the phosphorylation of pantothenate (Pan), the first step in CoA biosynthesis. The chain is Type III pantothenate kinase from Ehrlichia ruminantium (strain Gardel).